The primary structure comprises 447 residues: Dirigent protein 10 (447 aa).

A signal peptide spans M1 to A21. A compositionally biased stretch (gly residues) spans S74–T85. Residues S74 to T123 are disordered. Residues G86–S107 show a composition bias toward low complexity.

The protein belongs to the plant dirigent protein family. Homodimer. As to expression, in roots, mostly detected in root endodermis and quiescent center, and, to a lower extent, in root stele and cortex. Expressed in root vascular cylinder, flowers, siliques, cotyledon and leaf veins, and leaf margins. Present in the basal region of rosette leaf trichomes and in developing xylem.

The protein localises to the secreted. It is found in the extracellular space. It localises to the apoplast. Dirigent proteins impart stereoselectivity on the phenoxy radical-coupling reaction, yielding optically active lignans from two molecules of coniferyl alcohol in the biosynthesis of lignans, flavonolignans, and alkaloids and thus plays a central role in plant secondary metabolism. Regulates suberin accumulation in roots. The protein is Dirigent protein 10 (DIR10) of Arabidopsis thaliana (Mouse-ear cress).